Here is a 192-residue protein sequence, read N- to C-terminus: Ribosome maturation factor RimM (192 aa).

A PRC barrel domain is found at 116–192 (PGEYYWVDLI…RIIVDWQPDY (77 aa)).

The protein belongs to the RimM family. In terms of assembly, binds ribosomal protein uS19.

Its subcellular location is the cytoplasm. In terms of biological role, an accessory protein needed during the final step in the assembly of 30S ribosomal subunit, possibly for assembly of the head region. Essential for efficient processing of 16S rRNA. May be needed both before and after RbfA during the maturation of 16S rRNA. It has affinity for free ribosomal 30S subunits but not for 70S ribosomes. This Verminephrobacter eiseniae (strain EF01-2) protein is Ribosome maturation factor RimM.